The primary structure comprises 750 residues: Photosystem I P700 chlorophyll a apoprotein A1 (750 aa).

Transmembrane regions (helical) follow at residues 70-93, 156-179, 195-219, 291-309, 346-369, 385-411, 433-455, and 531-549; these read VFSA…FHGA, LYCT…FHYH, LNHH…HVSL, IAHH…GHMY, WHAQ…HHMY, LSLF…IFMV, AIIS…LYIH, and FLVH…LILL. [4Fe-4S] cluster-binding residues include Cys-573 and Cys-582. The next 2 membrane-spanning stretches (helical) occupy residues 589 to 610 and 664 to 686; these read HVFL…HFSW and LSAY…MFLF. Residue His-675 participates in chlorophyll a' binding. 2 residues coordinate chlorophyll a: Met-683 and Tyr-691. Phylloquinone is bound at residue Trp-692. The chain crosses the membrane as a helical span at residues 724–744; the sequence is AVGVTHYLLGGIATTWAFFLA.

This sequence belongs to the PsaA/PsaB family. The PsaA/B heterodimer binds the P700 chlorophyll special pair and subsequent electron acceptors. PSI consists of a core antenna complex that captures photons, and an electron transfer chain that converts photonic excitation into a charge separation. The eukaryotic PSI reaction center is composed of at least 11 subunits. The cofactor is P700 is a chlorophyll a/chlorophyll a' dimer, A0 is one or more chlorophyll a, A1 is one or both phylloquinones and FX is a shared 4Fe-4S iron-sulfur center..

The protein localises to the plastid. The protein resides in the chloroplast thylakoid membrane. The enzyme catalyses reduced [plastocyanin] + hnu + oxidized [2Fe-2S]-[ferredoxin] = oxidized [plastocyanin] + reduced [2Fe-2S]-[ferredoxin]. Its function is as follows. PsaA and PsaB bind P700, the primary electron donor of photosystem I (PSI), as well as the electron acceptors A0, A1 and FX. PSI is a plastocyanin-ferredoxin oxidoreductase, converting photonic excitation into a charge separation, which transfers an electron from the donor P700 chlorophyll pair to the spectroscopically characterized acceptors A0, A1, FX, FA and FB in turn. Oxidized P700 is reduced on the lumenal side of the thylakoid membrane by plastocyanin. The protein is Photosystem I P700 chlorophyll a apoprotein A1 of Pelargonium hortorum (Common geranium).